Here is a 336-residue protein sequence, read N- to C-terminus: Glucokinase (336 aa).

Residue 12 to 17 (ADIGGT) participates in ATP binding.

It belongs to the bacterial glucokinase family.

The protein resides in the cytoplasm. It carries out the reaction D-glucose + ATP = D-glucose 6-phosphate + ADP + H(+). In Helicobacter pylori (strain ATCC 700392 / 26695) (Campylobacter pylori), this protein is Glucokinase.